Here is a 488-residue protein sequence, read N- to C-terminus: 1-deoxy-D-xylulose 5-phosphate reductoisomerase, apicoplastic (488 aa).

An apicoplast-targeting transit peptide spans 1-72 (MKKYIYIYFF…LCKKDLIDIG (72 aa)). NADP(+)-binding positions include 86-89 (TGSI) and 115-117 (NKS). Lysine 205 contacts 1-deoxy-D-xylulose 5-phosphate. Glutamate 206 lines the NADP(+) pocket. Mn(2+) is bound at residue aspartate 231. 4 residues coordinate 1-deoxy-D-xylulose 5-phosphate: serine 232, glutamate 233, serine 270, and histidine 293. Residue glutamate 233 coordinates Mn(2+). NADP(+) is bound at residue glycine 299. 1-deoxy-D-xylulose 5-phosphate is bound by residues serine 306, asparagine 311, lysine 312, and glutamate 315. Position 315 (glutamate 315) interacts with Mn(2+).

The protein belongs to the DXR family. In terms of assembly, homodimer. Requires Mg(2+) as cofactor. Mn(2+) is required as a cofactor.

It is found in the plastid. The protein resides in the apicoplast. It carries out the reaction 2-C-methyl-D-erythritol 4-phosphate + NADP(+) = 1-deoxy-D-xylulose 5-phosphate + NADPH + H(+). It functions in the pathway isoprenoid biosynthesis; isopentenyl diphosphate biosynthesis via DXP pathway; isopentenyl diphosphate from 1-deoxy-D-xylulose 5-phosphate: step 1/6. Its activity is regulated as follows. Inhibited by fosmidomycin and its derivatives. Functionally, catalyzes the NADPH-dependent rearrangement and reduction of 1-deoxy-D-xylulose-5-phosphate (DXP) to 2-C-methyl-D-erythritol 4-phosphate (MEP). The protein is 1-deoxy-D-xylulose 5-phosphate reductoisomerase, apicoplastic (DXR) of Plasmodium falciparum (isolate 3D7).